The following is a 168-amino-acid chain: Endoribonuclease YbeY (168 aa).

Residues histidine 128, histidine 132, and histidine 138 each coordinate Zn(2+).

It belongs to the endoribonuclease YbeY family. It depends on Zn(2+) as a cofactor.

It localises to the cytoplasm. Functionally, single strand-specific metallo-endoribonuclease involved in late-stage 70S ribosome quality control and in maturation of the 3' terminus of the 16S rRNA. This chain is Endoribonuclease YbeY, found in Sphingopyxis alaskensis (strain DSM 13593 / LMG 18877 / RB2256) (Sphingomonas alaskensis).